We begin with the raw amino-acid sequence, 286 residues long: Puff II/9-2 protein (286 aa).

An N-terminal signal peptide occupies residues 1 to 19 (MKQFIVLTVVLLAIQELQG). The helical stretch occupies residues 61–235 (IDGLKKENNI…EKDLNTLRCE (175 aa)). Residue asparagine 156 is glycosylated (N-linked (GlcNAc...) asparagine).

This is Puff II/9-2 protein (II/9-2) from Bradysia coprophila (Dark-winged fungus gnat).